A 492-amino-acid polypeptide reads, in one-letter code: 56 kDa U1 small nuclear ribonucleoprotein component (492 aa).

A compositionally biased stretch (basic residues) spans 1-15 (MRPRRRGLAYHHTKP). Disordered stretches follow at residues 1–35 (MRPR…QRRK) and 300–371 (DQFP…NKPG). A compositionally biased stretch (polar residues) spans 18-30 (QLSQGHYPTTSND). Positions 310-321 (SNSPSSNSISSS) are enriched in low complexity. Positions 329–353 (TSYQTQPQRHAVNKPSNVLNSSNRH) are enriched in polar residues.

Component of the 18S U1 snRNP particle, a subcomplex of the spliceosome. Interacts with the nuclear cap-binding complex CBC1-CBC2 (yCBC). Directly contacts intronic sequences of substrate pre-RNA.

It is found in the nucleus. In terms of biological role, component of the U1 snRNP particle, which recognizes and binds the 5'-splice site of pre-mRNA. Together with other non-snRNP factors, U1 snRNP forms the spliceosomal commitment complex, that targets pre-mRNA to the splicing pathway. The chain is 56 kDa U1 small nuclear ribonucleoprotein component (SNU56) from Saccharomyces cerevisiae (strain ATCC 204508 / S288c) (Baker's yeast).